Reading from the N-terminus, the 67-residue chain is Alpha-toxin Bu1 (67 aa).

The 63-residue stretch at 3-65 folds into the LCN-type CS-alpha/beta domain; it reads RDAYIADDKN…VPIRIPGRCR (63 aa). 4 cysteine pairs are disulfide-bonded: Cys13–Cys64, Cys17–Cys37, Cys23–Cys47, and Cys27–Cys49. An Arginine amide modification is found at Arg65.

This sequence belongs to the long (4 C-C) scorpion toxin superfamily. Sodium channel inhibitor family. Alpha subfamily. Expressed by the venom gland.

It is found in the secreted. Its function is as follows. Alpha toxins bind voltage-independently at site-3 of sodium channels (Nav) and inhibit the inactivation of the activated channels, thereby blocking neuronal transmission. Since the experiments have been done on F11 cells (immortalized cell line derived from rat DRG neurons mainly expressing Nav1.3/SCN3A, but also Nav1.7/SCN9A and Nav1.2/SCN2A), it is supposed to act on these channels. The slow of inactivation process is partially reversible. Is lethal to mice. This chain is Alpha-toxin Bu1, found in Buthacus macrocentrus (Turkish scorpion).